The following is a 372-amino-acid chain: uncharacterized protein (372 aa).

Residues Asp-202 and 227–229 contribute to the S-adenosyl-L-methionine site; that span reads GDF.

Belongs to the class I-like SAM-binding methyltransferase superfamily. Cation-independent O-methyltransferase family.

This is an uncharacterized protein from Methanocaldococcus jannaschii (strain ATCC 43067 / DSM 2661 / JAL-1 / JCM 10045 / NBRC 100440) (Methanococcus jannaschii).